The chain runs to 339 residues: Ketol-acid reductoisomerase (NADP(+)) (339 aa).

A KARI N-terminal Rossmann domain is found at methionine 1–threonine 182. NADP(+)-binding positions include tyrosine 24–glutamine 27, lysine 48, serine 51, threonine 53, and aspartate 83–glutamine 86. Histidine 108 is a catalytic residue. Glycine 134 contacts NADP(+). A KARI C-terminal knotted domain is found at asparagine 183–isoleucine 328. Mg(2+) is bound by residues aspartate 191, glutamate 195, glutamate 227, and glutamate 231. Substrate is bound at residue serine 252.

Belongs to the ketol-acid reductoisomerase family. Requires Mg(2+) as cofactor.

It catalyses the reaction (2R)-2,3-dihydroxy-3-methylbutanoate + NADP(+) = (2S)-2-acetolactate + NADPH + H(+). It carries out the reaction (2R,3R)-2,3-dihydroxy-3-methylpentanoate + NADP(+) = (S)-2-ethyl-2-hydroxy-3-oxobutanoate + NADPH + H(+). The protein operates within amino-acid biosynthesis; L-isoleucine biosynthesis; L-isoleucine from 2-oxobutanoate: step 2/4. It functions in the pathway amino-acid biosynthesis; L-valine biosynthesis; L-valine from pyruvate: step 2/4. Involved in the biosynthesis of branched-chain amino acids (BCAA). Catalyzes an alkyl-migration followed by a ketol-acid reduction of (S)-2-acetolactate (S2AL) to yield (R)-2,3-dihydroxy-isovalerate. In the isomerase reaction, S2AL is rearranged via a Mg-dependent methyl migration to produce 3-hydroxy-3-methyl-2-ketobutyrate (HMKB). In the reductase reaction, this 2-ketoacid undergoes a metal-dependent reduction by NADPH to yield (R)-2,3-dihydroxy-isovalerate. The sequence is that of Ketol-acid reductoisomerase (NADP(+)) from Agrobacterium fabrum (strain C58 / ATCC 33970) (Agrobacterium tumefaciens (strain C58)).